Here is a 157-residue protein sequence, read N- to C-terminus: Small ribosomal subunit protein uS7 (157 aa).

The protein belongs to the universal ribosomal protein uS7 family. As to quaternary structure, part of the 30S ribosomal subunit. Contacts proteins S9 and S11.

Its function is as follows. One of the primary rRNA binding proteins, it binds directly to 16S rRNA where it nucleates assembly of the head domain of the 30S subunit. Is located at the subunit interface close to the decoding center, probably blocks exit of the E-site tRNA. This chain is Small ribosomal subunit protein uS7, found in Pseudomonas fluorescens (strain Pf0-1).